The following is an 85-amino-acid chain: YcgL domain-containing protein PC1_1941 (85 aa).

One can recognise a YcgL domain in the interval 1-85 (MFCVIYRSAK…PVENLLNTPV (85 aa)).

This is YcgL domain-containing protein PC1_1941 from Pectobacterium carotovorum subsp. carotovorum (strain PC1).